The sequence spans 244 residues: Probable metallo-hydrolase YhfI (244 aa).

7 residues coordinate Zn(2+): His59, His61, Asp63, His64, His134, Asp155, and His211.

It belongs to the metallo-beta-lactamase superfamily. Zn(2+) is required as a cofactor.

In Bacillus subtilis (strain 168), this protein is Probable metallo-hydrolase YhfI (yhfI).